The following is a 318-amino-acid chain: Protoheme IX farnesyltransferase (318 aa).

A run of 9 helical transmembrane segments spans residues 29–49, 51–71, 102–122, 123–143, 151–171, 179–199, 219–239, 241–261, and 280–300; these read IIPL…QGQV, PVLL…AQTI, LIFA…FANL, LAAS…THWL, IVIG…AVTG, LIFA…ALMI, ATVK…LLLV, PLHS…AVFI, and LFLY…IDSL.

The protein belongs to the UbiA prenyltransferase family. Protoheme IX farnesyltransferase subfamily.

It is found in the cell inner membrane. The enzyme catalyses heme b + (2E,6E)-farnesyl diphosphate + H2O = Fe(II)-heme o + diphosphate. It participates in porphyrin-containing compound metabolism; heme O biosynthesis; heme O from protoheme: step 1/1. Functionally, converts heme B (protoheme IX) to heme O by substitution of the vinyl group on carbon 2 of heme B porphyrin ring with a hydroxyethyl farnesyl side group. The protein is Protoheme IX farnesyltransferase of Trichormus variabilis (strain ATCC 29413 / PCC 7937) (Anabaena variabilis).